Reading from the N-terminus, the 241-residue chain is Glutathione S-transferase theta-3 (241 aa).

Residues 2 to 82 enclose the GST N-terminal domain; sequence GLELYLDLMS…YLSRKYKAPD (81 aa). Residues 53–54 and 66–67 each bind glutathione; these read KV and ES. In terms of domain architecture, GST C-terminal spans 88-222; the sequence is DLQTRARVDE…VVLKAKDMPP (135 aa).

The protein belongs to the GST superfamily. Theta family. In terms of assembly, homodimer. In terms of tissue distribution, expressed strongly in liver, and at lower levels in kidney and testis.

It localises to the cytoplasm. The catalysed reaction is RX + glutathione = an S-substituted glutathione + a halide anion + H(+). Conjugation of reduced glutathione to a wide number of exogenous and endogenous hydrophobic electrophiles. Shows high activity towards 4-nitrobenzyl chloride (4-NBC). Also has lower activity towards 1,2-epoxy-3-(p-nitrophenoxy)propane (EPNP), cumene hydroperoxide, 1-chloro-2,4-dinitrobenzene (CDNB), 7-chloro-4-nitrobenzo-2-oxa-1,3-diazole (NBD-Cl), and ethacrynic acid. The polypeptide is Glutathione S-transferase theta-3 (Mus musculus (Mouse)).